The following is a 235-amino-acid chain: uncharacterized protein (235 aa).

It to E.coli YbeU.

This is an uncharacterized protein from Escherichia coli (strain K12).